Consider the following 647-residue polypeptide: DNA mismatch repair protein MutL (647 aa).

The tract at residues 389–423 (SESSVSSVANKQQPTVKQAKRSADDSDSEHGKLDY) is disordered. Residues 409 to 423 (RSADDSDSEHGKLDY) show a composition bias toward basic and acidic residues.

The protein belongs to the DNA mismatch repair MutL/HexB family.

Its function is as follows. This protein is involved in the repair of mismatches in DNA. It is required for dam-dependent methyl-directed DNA mismatch repair. May act as a 'molecular matchmaker', a protein that promotes the formation of a stable complex between two or more DNA-binding proteins in an ATP-dependent manner without itself being part of a final effector complex. This Streptococcus thermophilus (strain ATCC BAA-491 / LMD-9) protein is DNA mismatch repair protein MutL.